The following is a 262-amino-acid chain: Succinate dehydrogenase [ubiquinone] iron-sulfur subunit (262 aa).

Positions Lys-21–Pro-110 constitute a 2Fe-2S ferredoxin-type domain. [2Fe-2S] cluster-binding residues include Cys-73, Cys-78, Cys-81, and Cys-93. Residues Asp-154–Tyr-184 form the 4Fe-4S ferredoxin-type domain. Positions 164, 167, and 170 each coordinate [4Fe-4S] cluster. Residue Cys-174 coordinates [3Fe-4S] cluster. An a ubiquinone-binding site is contributed by Trp-179. Positions 221 and 227 each coordinate [3Fe-4S] cluster. Cys-231 contributes to the [4Fe-4S] cluster binding site.

It belongs to the succinate dehydrogenase/fumarate reductase iron-sulfur protein family. Component of complex II composed of four subunits: a flavoprotein (FP), an iron-sulfur protein (IP), and a cytochrome b composed of a large and a small subunit. [2Fe-2S] cluster is required as a cofactor. Requires [3Fe-4S] cluster as cofactor. The cofactor is [4Fe-4S] cluster.

Its subcellular location is the mitochondrion inner membrane. It carries out the reaction a quinone + succinate = fumarate + a quinol. It participates in carbohydrate metabolism; tricarboxylic acid cycle; fumarate from succinate (eukaryal route): step 1/1. In terms of biological role, iron-sulfur protein (IP) subunit of succinate dehydrogenase (SDH) that is involved in complex II of the mitochondrial electron transport chain and is responsible for transferring electrons from succinate to ubiquinone (coenzyme Q). The sequence is that of Succinate dehydrogenase [ubiquinone] iron-sulfur subunit (SDH2) from Cyanidium caldarium (Red alga).